Here is a 98-residue protein sequence, read N- to C-terminus: Leydig cell tumor 10 kDa protein homolog (98 aa).

Disordered regions lie at residues 1 to 38 and 73 to 98; these read MAQG…RVIA and SLPK…KMPA. A compositionally biased stretch (low complexity) spans 16–25; that stretch reads SKAAAAAASA. The segment covering 28–38 has biased composition (basic residues); sequence RGPRKGGRVIA. Low complexity predominate over residues 73–83; that stretch reads SLPKKLALLKA.

Belongs to the UPF0390 family.

Its function is as follows. May have a potential role in hypercalcemia of malignancy. The polypeptide is Leydig cell tumor 10 kDa protein homolog (Bos taurus (Bovine)).